Reading from the N-terminus, the 367-residue chain is tRNA-specific 2-thiouridylase MnmA (367 aa).

Residues 12–19 (GMSGGVDS) and Met-38 contribute to the ATP site. Positions 98–100 (NPD) are interaction with target base in tRNA. Cys-103 functions as the Nucleophile in the catalytic mechanism. A disulfide bridge connects residues Cys-103 and Cys-200. ATP is bound at residue Gly-128. Residues 150–152 (KDQ) are interaction with tRNA. Cys-200 acts as the Cysteine persulfide intermediate in catalysis. The interaction with tRNA stretch occupies residues 312 to 313 (RY).

This sequence belongs to the MnmA/TRMU family.

The protein localises to the cytoplasm. The enzyme catalyses S-sulfanyl-L-cysteinyl-[protein] + uridine(34) in tRNA + AH2 + ATP = 2-thiouridine(34) in tRNA + L-cysteinyl-[protein] + A + AMP + diphosphate + H(+). Its function is as follows. Catalyzes the 2-thiolation of uridine at the wobble position (U34) of tRNA, leading to the formation of s(2)U34. The protein is tRNA-specific 2-thiouridylase MnmA of Psychromonas ingrahamii (strain DSM 17664 / CCUG 51855 / 37).